The chain runs to 80 residues: Exodeoxyribonuclease 7 small subunit (80 aa).

This sequence belongs to the XseB family. As to quaternary structure, heterooligomer composed of large and small subunits.

It is found in the cytoplasm. The catalysed reaction is Exonucleolytic cleavage in either 5'- to 3'- or 3'- to 5'-direction to yield nucleoside 5'-phosphates.. Bidirectionally degrades single-stranded DNA into large acid-insoluble oligonucleotides, which are then degraded further into small acid-soluble oligonucleotides. In Salmonella paratyphi B (strain ATCC BAA-1250 / SPB7), this protein is Exodeoxyribonuclease 7 small subunit.